The primary structure comprises 168 residues: Avenin-like a1 (168 aa).

The N-terminal stretch at 1 to 19 is a signal peptide; the sequence is MKTMFLLALLAFTATSAVA.

The protein belongs to the prolamin family. In terms of processing, contains 7 disulfide bonds.

Seed storage protein. Not integrated in the gluten polymer through disulfide bonds, unless incorporated by reduction and reoxidation during dough making. Increases dough strength and bread volume, but decreases dough stability when added into a base wheat flour. The polypeptide is Avenin-like a1 (AVNLA) (Triticum aestivum (Wheat)).